A 155-amino-acid chain; its full sequence is Interleukin-2 (155 aa).

An N-terminal signal peptide occupies residues 1–20 (MYKMQLLSCIALMLVLVANS). T24 carries O-linked (GalNAc...) threonine glycosylation. A disulfide bond links C79 and C127. N-linked (GlcNAc...) asparagine glycosylation occurs at N112.

The protein belongs to the IL-2 family.

Its subcellular location is the secreted. Its function is as follows. Cytokine produced by activated CD4-positive helper T-cells and to a lesser extend activated CD8-positive T-cells and natural killer (NK) cells that plays pivotal roles in the immune response and tolerance. Binds to a receptor complex composed of either the high-affinity trimeric IL-2R (IL2RA/CD25, IL2RB/CD122 and IL2RG/CD132) or the low-affinity dimeric IL-2R (IL2RB and IL2RG). Interaction with the receptor leads to oligomerization and conformation changes in the IL-2R subunits resulting in downstream signaling starting with phosphorylation of JAK1 and JAK3. In turn, JAK1 and JAK3 phosphorylate the receptor to form a docking site leading to the phosphorylation of several substrates including STAT5. This process leads to activation of several pathways including STAT, phosphoinositide-3-kinase/PI3K and mitogen-activated protein kinase/MAPK pathways. Functions as a T-cell growth factor and can increase NK-cell cytolytic activity as well. Promotes strong proliferation of activated B-cells and subsequently immunoglobulin production. Plays a pivotal role in regulating the adaptive immune system by controlling the survival and proliferation of regulatory T-cells, which are required for the maintenance of immune tolerance. Moreover, participates in the differentiation and homeostasis of effector T-cell subsets, including Th1, Th2, Th17 as well as memory CD8-positive T-cells. The sequence is that of Interleukin-2 (IL2) from Vulpes vulpes (Red fox).